Reading from the N-terminus, the 141-residue chain is Large ribosomal subunit protein uL22 (141 aa).

It belongs to the universal ribosomal protein uL22 family. In terms of assembly, part of the 50S ribosomal subunit.

This protein binds specifically to 23S rRNA; its binding is stimulated by other ribosomal proteins, e.g. L4, L17, and L20. It is important during the early stages of 50S assembly. It makes multiple contacts with different domains of the 23S rRNA in the assembled 50S subunit and ribosome. Functionally, the globular domain of the protein is located near the polypeptide exit tunnel on the outside of the subunit, while an extended beta-hairpin is found that lines the wall of the exit tunnel in the center of the 70S ribosome. The chain is Large ribosomal subunit protein uL22 from Frankia casuarinae (strain DSM 45818 / CECT 9043 / HFP020203 / CcI3).